Here is an 825-residue protein sequence, read N- to C-terminus: Osmosensitive cation channel TMEM63C (825 aa).

The Extracellular segment spans residues 1–50 (MAFESWPAGGVRPVEELDVRSFLMEENSTAERCYRSHSRSSVLQGLPFGG). A helical membrane pass occupies residues 51–75 (VPTVLAINVVLWLILLLIFSCLRKA). Over 76–141 (AWDYGRLALL…KDEEIRSKCG (66 aa)) the chain is Cytoplasmic. Residues 98–117 (EQSEKEKTPSDSSPSDSETK) are disordered. A helical transmembrane segment spans residues 142-174 (IDAVTYLSFQRHIILLMMVVCLLSLTIILPVNL). The Extracellular portion of the chain corresponds to 175 to 198 (SGNLLGDNPENFGRTTVVNVPAQN). The chain crosses the membrane as a helical span at residues 199–223 (IFLWLHSIFALLYFVITVLCMAHHS). The Cytoplasmic portion of the chain corresponds to 224–418 (SRLEYREDEK…IIWENLSVCG (195 aa)). A helical transmembrane segment spans residues 419-448 (PRWWLRCILLNILLFLLLFFLTTPAIIVNT). Over 449–463 (MDKFNVTRPVESLRN) the chain is Extracellular. Residues 464–493 (PVITQFFPTLLLWAFSILLPFIVYYSSFFE) traverse the membrane as a helical segment. Over 494–497 (YHWT) the chain is Cytoplasmic. Residues 498–534 (RSGENQVTMHKCFLLLVFMVIILPSLGLSSLNLFFRW) traverse the membrane as a helical segment. Over 535–557 (LFDVRFLDETDVKFQCVFLPDNG) the chain is Extracellular. Residues 558–590 (AFFVNYVITSSLIGTAMELLRIPALLVYSLRLC) traverse the membrane as a helical segment. Topologically, residues 591–610 (FAKSKAECIHVKISQAYEFQ) are cytoplasmic. The chain crosses the membrane as a helical span at residues 611–629 (FGLEYAWTMCIFSVSMTYS). Topologically, residues 630–632 (ITC) are extracellular. A helical membrane pass occupies residues 633-657 (PVIVPFGLLYLVLKHMVDRYNIYYA). At 658–664 (YTPTKLN) the chain is on the cytoplasmic side. A helical membrane pass occupies residues 665–693 (QRIHAAAISQVVVAPILCMFWLLFFSVLR). The Extracellular segment spans residues 694-698 (LGPVQ). A helical membrane pass occupies residues 699-719 (PITLFTFITLLCSIAFSCFGF). Residues 720–825 (CMKKLRADRS…LLMDSPVAFQ (106 aa)) lie on the Cytoplasmic side of the membrane. Residues 777–825 (SPAHQSYGTMVNSQSSVRDAEEDEEKDLEETLETELKDDLLMDSPVAFQ) form a disordered region. Residues 779–793 (AHQSYGTMVNSQSSV) show a composition bias toward polar residues. Acidic residues predominate over residues 796–809 (AEEDEEKDLEETLE).

The protein belongs to the CSC1 (TC 1.A.17) family. Monomer.

The protein resides in the endoplasmic reticulum membrane. The protein localises to the cell membrane. It carries out the reaction Ca(2+)(in) = Ca(2+)(out). Acts as an osmosensitive cation channel preferentially activated upon hypotonic stress. In contrast to tmem63b, does not show phospholipid scramblase activity. Required for the functional integrity of the kidney glomerular filtration barrier. This Danio rerio (Zebrafish) protein is Osmosensitive cation channel TMEM63C (tmem63c).